The chain runs to 1373 residues: DNA-directed RNA polymerase subunit beta (1373 aa).

This sequence belongs to the RNA polymerase beta chain family. In terms of assembly, the RNAP catalytic core consists of 2 alpha, 1 beta, 1 beta' and 1 omega subunit. When a sigma factor is associated with the core the holoenzyme is formed, which can initiate transcription.

The catalysed reaction is RNA(n) + a ribonucleoside 5'-triphosphate = RNA(n+1) + diphosphate. In terms of biological role, DNA-dependent RNA polymerase catalyzes the transcription of DNA into RNA using the four ribonucleoside triphosphates as substrates. The polypeptide is DNA-directed RNA polymerase subunit beta (Rickettsia massiliae (strain Mtu5)).